The following is a 392-amino-acid chain: DNA-directed RNA polymerase subunit Rpo1C (392 aa).

The protein belongs to the RNA polymerase beta' chain family. As to quaternary structure, part of the RNA polymerase complex.

It is found in the cytoplasm. The enzyme catalyses RNA(n) + a ribonucleoside 5'-triphosphate = RNA(n+1) + diphosphate. Functionally, DNA-dependent RNA polymerase (RNAP) catalyzes the transcription of DNA into RNA using the four ribonucleoside triphosphates as substrates. Forms part of the jaw domain. This is DNA-directed RNA polymerase subunit Rpo1C from Metallosphaera sedula (strain ATCC 51363 / DSM 5348 / JCM 9185 / NBRC 15509 / TH2).